The primary structure comprises 121 residues: Large ribosomal subunit protein uL14 (121 aa).

This sequence belongs to the universal ribosomal protein uL14 family. In terms of assembly, part of the 50S ribosomal subunit. Forms a cluster with proteins L3 and L19. In the 70S ribosome, L14 and L19 interact and together make contacts with the 16S rRNA in bridges B5 and B8.

In terms of biological role, binds to 23S rRNA. Forms part of two intersubunit bridges in the 70S ribosome. The chain is Large ribosomal subunit protein uL14 from Pseudoalteromonas atlantica (strain T6c / ATCC BAA-1087).